The chain runs to 140 residues: Nuclear receptor 2C2-associated protein (140 aa).

It belongs to the NR2C2AP family. In terms of assembly, interacts with NR2C2/TR4.

The protein localises to the nucleus. Functionally, may act as a repressor of NR2C2-mediated transactivation by suppressing the binding between NR2C2/TR4 and the TR4-response element in target genes. The polypeptide is Nuclear receptor 2C2-associated protein (NR2C2AP) (Bos taurus (Bovine)).